The sequence spans 99 residues: Large ribosomal subunit protein uL23 (99 aa).

The protein belongs to the universal ribosomal protein uL23 family. As to quaternary structure, part of the 50S ribosomal subunit. Contacts protein L29, and trigger factor when it is bound to the ribosome.

Its function is as follows. One of the early assembly proteins it binds 23S rRNA. One of the proteins that surrounds the polypeptide exit tunnel on the outside of the ribosome. Forms the main docking site for trigger factor binding to the ribosome. This Streptococcus suis (strain 98HAH33) protein is Large ribosomal subunit protein uL23.